The chain runs to 64 residues: uncharacterized protein (64 aa).

This is an uncharacterized protein from Bdellovibrio phage phiMH2K (Bacteriophage phiMH2K).